A 263-amino-acid polypeptide reads, in one-letter code: 5'-nucleotidase SurE (263 aa).

A divalent metal cation-binding residues include Asp-8, Asp-9, Ser-40, and Asn-93.

It belongs to the SurE nucleotidase family. Requires a divalent metal cation as cofactor.

It localises to the cytoplasm. The enzyme catalyses a ribonucleoside 5'-phosphate + H2O = a ribonucleoside + phosphate. Its function is as follows. Nucleotidase that shows phosphatase activity on nucleoside 5'-monophosphates. The polypeptide is 5'-nucleotidase SurE (Caulobacter vibrioides (strain ATCC 19089 / CIP 103742 / CB 15) (Caulobacter crescentus)).